We begin with the raw amino-acid sequence, 745 residues long: Ribosomal protein S6 kinase alpha-6 (745 aa).

Residues 1-28 (MLPFAPQDEPWDREMEVFSGGGASSGEV) are disordered. The region spanning 73-330 (FELLKVLGQG…VEEIKRHLFF (258 aa)) is the Protein kinase 1 domain. Residues 79 to 87 (LGQGSFGKV) and K105 each bind ATP. D198 (proton acceptor) is an active-site residue. A phosphoserine mark is found at S232, S372, and S389. The region spanning 331-400 (ANIDWDKLYK…VATSIAEEYK (70 aa)) is the AGC-kinase C-terminal domain. Residues 426 to 683 (YELKEDIGVG…AEQILKHSWI (258 aa)) enclose the Protein kinase 2 domain. ATP contacts are provided by residues 432–440 (IGVGSYSVC) and K455. The active-site Proton acceptor is D543. The residue at position 581 (T581) is a Phosphothreonine.

This sequence belongs to the protein kinase superfamily. AGC Ser/Thr protein kinase family. S6 kinase subfamily. As to quaternary structure, forms a complex with MAPK3/ERK1 but not with MAPK9 or MAPK14 in serum-starved cells. It depends on Mg(2+) as a cofactor. In terms of processing, phosphorylated at Ser-232, Ser-372, and Ser-389 in serum-starved cells.

The protein localises to the cytoplasm. Its subcellular location is the cytosol. It localises to the nucleus. It catalyses the reaction L-seryl-[protein] + ATP = O-phospho-L-seryl-[protein] + ADP + H(+). It carries out the reaction L-threonyl-[protein] + ATP = O-phospho-L-threonyl-[protein] + ADP + H(+). Its activity is regulated as follows. Constitutively activated by phosphorylation at Ser-232, Ser-372, and Ser-389 in serum-starved cells. Does not require growth factor stimulation for significant kinase activity. Its function is as follows. Constitutively active serine/threonine-protein kinase that exhibits growth-factor-independent kinase activity and that may participate in p53/TP53-dependent cell growth arrest signaling and play an inhibitory role during embryogenesis. The sequence is that of Ribosomal protein S6 kinase alpha-6 (RPS6KA6) from Homo sapiens (Human).